A 351-amino-acid chain; its full sequence is UDP-3-O-acylglucosamine N-acyltransferase (351 aa).

The Proton acceptor role is filled by His-257.

This sequence belongs to the transferase hexapeptide repeat family. LpxD subfamily. In terms of assembly, homotrimer.

The catalysed reaction is a UDP-3-O-[(3R)-3-hydroxyacyl]-alpha-D-glucosamine + a (3R)-hydroxyacyl-[ACP] = a UDP-2-N,3-O-bis[(3R)-3-hydroxyacyl]-alpha-D-glucosamine + holo-[ACP] + H(+). Its pathway is bacterial outer membrane biogenesis; LPS lipid A biosynthesis. In terms of biological role, catalyzes the N-acylation of UDP-3-O-acylglucosamine using 3-hydroxyacyl-ACP as the acyl donor. Is involved in the biosynthesis of lipid A, a phosphorylated glycolipid that anchors the lipopolysaccharide to the outer membrane of the cell. In Methylorubrum populi (strain ATCC BAA-705 / NCIMB 13946 / BJ001) (Methylobacterium populi), this protein is UDP-3-O-acylglucosamine N-acyltransferase.